Reading from the N-terminus, the 387-residue chain is Monopolar spindle protein 2 (387 aa).

Residues 157–269 adopt a coiled-coil conformation; the sequence is NNIGKALEVQ…FLKDQIRRER (113 aa). The disordered stretch occupies residues 216 to 235; sequence RQVEDNQNSSRTSDPGSPLV. A compositionally biased stretch (polar residues) spans 220 to 230; sequence DNQNSSRTSDP. Residues 311 to 327 form a helical membrane-spanning segment; that stretch reads IRIIVCFALLAGVLPYI.

Belongs to the MPS2 family. Interacts with BBP1, MPS3, and SPC24.

The protein resides in the nucleus membrane. It localises to the cytoplasm. Its subcellular location is the cytoskeleton. It is found in the microtubule organizing center. The protein localises to the spindle pole body. Component of the spindle pole body (SPB) required for insertion of the nascent SPB into the nuclear envelope and for the proper execution of spindle pole body (SPB) duplication. This Saccharomyces cerevisiae (strain RM11-1a) (Baker's yeast) protein is Monopolar spindle protein 2 (MPS2).